A 251-amino-acid chain; its full sequence is Triosephosphate isomerase (251 aa).

Position 9-11 (Asn9–Lys11) interacts with substrate. His94 (electrophile) is an active-site residue. Glu166 functions as the Proton acceptor in the catalytic mechanism. Substrate is bound by residues Gly172, Ser211, and Gly232–Gly233.

It belongs to the triosephosphate isomerase family. In terms of assembly, homodimer.

The protein resides in the cytoplasm. The enzyme catalyses D-glyceraldehyde 3-phosphate = dihydroxyacetone phosphate. The protein operates within carbohydrate biosynthesis; gluconeogenesis. It functions in the pathway carbohydrate degradation; glycolysis; D-glyceraldehyde 3-phosphate from glycerone phosphate: step 1/1. Functionally, involved in the gluconeogenesis. Catalyzes stereospecifically the conversion of dihydroxyacetone phosphate (DHAP) to D-glyceraldehyde-3-phosphate (G3P). The polypeptide is Triosephosphate isomerase (Xanthomonas campestris pv. campestris (strain 8004)).